The chain runs to 234 residues: Ribulose-phosphate 3-epimerase (234 aa).

Substrate is bound at residue serine 7. A divalent metal cation is bound by residues histidine 32, aspartate 34, and histidine 65. Aspartate 34 (proton acceptor) is an active-site residue. Substrate is bound by residues histidine 65, 139–142, 172–174, and 194–195; these read GFSG, DGG, and AS. Residue aspartate 172 coordinates a divalent metal cation. Aspartate 172 acts as the Proton donor in catalysis.

The protein belongs to the ribulose-phosphate 3-epimerase family. A divalent metal cation is required as a cofactor.

The catalysed reaction is D-ribulose 5-phosphate = D-xylulose 5-phosphate. Its pathway is carbohydrate degradation. Catalyzes the reversible epimerization of D-ribulose 5-phosphate to D-xylulose 5-phosphate. The sequence is that of Ribulose-phosphate 3-epimerase from Methanocaldococcus jannaschii (strain ATCC 43067 / DSM 2661 / JAL-1 / JCM 10045 / NBRC 100440) (Methanococcus jannaschii).